Consider the following 52-residue polypeptide: uncharacterized protein (52 aa).

A helical transmembrane segment spans residues 7-27 (MFQLFVFIIFAAVVFAAVTGF).

It localises to the membrane. This is an uncharacterized protein from Bacillus subtilis (strain 168).